Consider the following 61-residue polypeptide: Small ribosomal subunit protein uS14 (61 aa).

Zn(2+) is bound by residues C24, C27, C40, and C43.

This sequence belongs to the universal ribosomal protein uS14 family. Zinc-binding uS14 subfamily. In terms of assembly, part of the 30S ribosomal subunit. Contacts proteins S3 and S10. Requires Zn(2+) as cofactor.

Binds 16S rRNA, required for the assembly of 30S particles and may also be responsible for determining the conformation of the 16S rRNA at the A site. This chain is Small ribosomal subunit protein uS14, found in Alkaliphilus oremlandii (strain OhILAs) (Clostridium oremlandii (strain OhILAs)).